The following is a 947-amino-acid chain: Protein translocase subunit SecA (947 aa).

Residues glutamine 87, 105 to 109 (GEGKT), and aspartate 494 each bind ATP. Residues 860 to 947 (TAPKPLPTQE…NRAPKSKRKR (88 aa)) form a disordered region. Low complexity predominate over residues 870–885 (AAARTTGTAAPTALRA). Composition is skewed to basic and acidic residues over residues 903 to 914 (EDGKAKATRDSA) and 922 to 931 (ASRRERREAA).

The protein belongs to the SecA family. As to quaternary structure, monomer and homodimer. Part of the essential Sec protein translocation apparatus which comprises SecA, SecYEG and auxiliary proteins SecDF. Other proteins may also be involved.

It localises to the cell membrane. The protein localises to the cytoplasm. The catalysed reaction is ATP + H2O + cellular proteinSide 1 = ADP + phosphate + cellular proteinSide 2.. In terms of biological role, part of the Sec protein translocase complex. Interacts with the SecYEG preprotein conducting channel. Has a central role in coupling the hydrolysis of ATP to the transfer of proteins into and across the cell membrane, serving as an ATP-driven molecular motor driving the stepwise translocation of polypeptide chains across the membrane. This Rhodococcus erythropolis (strain PR4 / NBRC 100887) protein is Protein translocase subunit SecA.